We begin with the raw amino-acid sequence, 421 residues long: UDP-N-acetylglucosamine 1-carboxyvinyltransferase (421 aa).

Residue 22–23 (KN) participates in phosphoenolpyruvate binding. UDP-N-acetyl-alpha-D-glucosamine is bound at residue Arg-91. Residue Cys-115 is the Proton donor of the active site. Cys-115 bears the 2-(S-cysteinyl)pyruvic acid O-phosphothioketal mark. Residues 120 to 124 (RPIDL), Asp-306, and Ile-328 contribute to the UDP-N-acetyl-alpha-D-glucosamine site.

It belongs to the EPSP synthase family. MurA subfamily.

It is found in the cytoplasm. It carries out the reaction phosphoenolpyruvate + UDP-N-acetyl-alpha-D-glucosamine = UDP-N-acetyl-3-O-(1-carboxyvinyl)-alpha-D-glucosamine + phosphate. Its pathway is cell wall biogenesis; peptidoglycan biosynthesis. In terms of biological role, cell wall formation. Adds enolpyruvyl to UDP-N-acetylglucosamine. In Methylacidiphilum infernorum (isolate V4) (Methylokorus infernorum (strain V4)), this protein is UDP-N-acetylglucosamine 1-carboxyvinyltransferase.